We begin with the raw amino-acid sequence, 70 residues long: Beta sliding clamp (70 aa).

The protein belongs to the beta sliding clamp family. As to quaternary structure, forms a ring-shaped head-to-tail homodimer around DNA which binds and tethers DNA polymerases and other proteins to the DNA. The DNA replisome complex has a single clamp-loading complex (3 tau and 1 each of delta, delta', psi and chi subunits) which binds 3 Pol III cores (1 core on the leading strand and 2 on the lagging strand) each with a beta sliding clamp dimer. Additional proteins in the replisome are other copies of gamma, psi and chi, Ssb, DNA helicase and RNA primase.

It is found in the cytoplasm. In terms of biological role, confers DNA tethering and processivity to DNA polymerases and other proteins. Acts as a clamp, forming a ring around DNA (a reaction catalyzed by the clamp-loading complex) which diffuses in an ATP-independent manner freely and bidirectionally along dsDNA. Initially characterized for its ability to contact the catalytic subunit of DNA polymerase III (Pol III), a complex, multichain enzyme responsible for most of the replicative synthesis in bacteria; Pol III exhibits 3'-5' exonuclease proofreading activity. The beta chain is required for initiation of replication as well as for processivity of DNA replication. The protein is Beta sliding clamp (dnaN) of Rhodobacter capsulatus (Rhodopseudomonas capsulata).